A 393-amino-acid chain; its full sequence is Thermostable carboxypeptidase 1 (393 aa).

The Zn(2+) site is built by His-104, Asp-109, and His-245. Tyr-302 (proton donor) is an active-site residue. Glu-373 functions as the Nucleophile in the catalytic mechanism.

Belongs to the peptidase M20 family. In terms of assembly, homotetramer. Requires Zn(2+) as cofactor.

Its function is as follows. Can release basic, acidic, aromatic, and, to a lesser extent, aliphatic amino acids. The chain is Thermostable carboxypeptidase 1 (cpsA1) from Saccharolobus solfataricus (strain ATCC 35092 / DSM 1617 / JCM 11322 / P2) (Sulfolobus solfataricus).